The primary structure comprises 197 residues: Putative double homeobox protein 3 (197 aa).

2 DNA-binding regions (homeobox) span residues 46-105 (GRRM…LRQH) and 121-180 (GRRK…WGQS). The disordered stretch occupies residues 102-127 (LRQHRRQSRPWPGRRDPQKGRRKRTA).

The protein belongs to the paired homeobox family. In terms of tissue distribution, expressed in hepatoma Hep3B cells.

The protein resides in the nucleus. This chain is Putative double homeobox protein 3 (DUX3), found in Homo sapiens (Human).